Consider the following 515-residue polypeptide: Putative ribose/galactose/methyl galactoside import ATP-binding protein (515 aa).

ABC transporter domains lie at 26–262 (LEVA…VGRE) and 272–511 (VALG…KIMD). Residue 58-65 (GENGAGKS) coordinates ATP.

It belongs to the ABC transporter superfamily. Carbohydrate importer 2 (CUT2) (TC 3.A.1.2) family.

It localises to the cell inner membrane. The catalysed reaction is D-ribose(out) + ATP + H2O = D-ribose(in) + ADP + phosphate + H(+). The enzyme catalyses D-galactose(out) + ATP + H2O = D-galactose(in) + ADP + phosphate + H(+). Functionally, part of an ABC transporter complex involved in carbohydrate import. Could be involved in ribose, galactose and/or methyl galactoside import. Responsible for energy coupling to the transport system. The chain is Putative ribose/galactose/methyl galactoside import ATP-binding protein from Hahella chejuensis (strain KCTC 2396).